A 346-amino-acid polypeptide reads, in one-letter code: Annexin A1 (346 aa).

N-acetylalanine is present on Ala2. A Phosphoserine; by TRPM7 modification is found at Ser5. An Isoglutamyl lysine isopeptide (Gln-Lys) (interchain with K-?) cross-link involves residue Gln19. The residue at position 21 (Tyr21) is a Phosphotyrosine; by EGFR. Residues 25-47 are disordered; that stretch reads VKGSKGGPGSAVSPYPTFNPSSD. 2 positions are modified to phosphoserine: Ser34 and Ser37. Thr41 carries the phosphothreonine modification. 4 Annexin repeats span residues 42–113, 114–185, 197–269, and 273–344; these read FNPS…ALLK, TPAQ…SLAK, DLAD…VVVK, and SKPM…ALCG. The residue at position 58 (Lys58) is an N6-acetyllysine. Residues Gly59, Val60, Glu62, Lys97, Leu100, Glu105, Met127, Gly129, Gly131, Thr132, and Glu134 each coordinate Ca(2+). A Phosphothreonine modification is found at Thr136. Ca(2+) is bound by residues Asp171, Gly210, and Arg213. A Glycyl lysine isopeptide (Lys-Gly) (interchain with G-Cter in SUMO1); alternate cross-link involves residue Lys214. Lys214 is covalently cross-linked (Glycyl lysine isopeptide (Lys-Gly) (interchain with G-Cter in SUMO2); alternate). Gly215 lines the Ca(2+) pocket. Lys239 bears the N6-acetyllysine mark. Ca(2+) contacts are provided by Asp253, Glu255, and Leu256. Residue Lys257 forms a Glycyl lysine isopeptide (Lys-Gly) (interchain with G-Cter in SUMO1) linkage. Glu261, Met286, Gly288, and Gly290 together coordinate Ca(2+). N6-acetyllysine is present on Lys312. Residues Cys324 and Cys343 are joined by a disulfide bond. Leu328, Glu330, and Thr331 together coordinate Ca(2+). Residue Lys332 forms a Glycyl lysine isopeptide (Lys-Gly) (interchain with G-Cter in SUMO1) linkage. Glu336 provides a ligand contact to Ca(2+).

The protein belongs to the annexin family. Homodimer; non-covalently linked. Homodimer; linked by transglutamylation. Homodimers linked by transglutamylation are observed in placenta, but not in other tissues. Interacts with S100A11. Heterotetramer, formed by two molecules each of S100A11 and ANXA1. Interacts with DYSF. Interacts with EGFR. Phosphorylated by EGFR. Phosphorylated by protein kinase C and TRPM7. Phosphorylated in response to EGF treatment. In terms of processing, sumoylated. Post-translationally, proteolytically cleaved by cathepsin CTSG to release the active N-terminal peptide Ac2-26. As to expression, detected in lung and spleen (at protein level).

It is found in the nucleus. The protein resides in the cytoplasm. Its subcellular location is the cell projection. It localises to the cilium. The protein localises to the basolateral cell membrane. It is found in the lateral cell membrane. The protein resides in the early endosome. Its subcellular location is the cell membrane. It localises to the cytoplasmic vesicle membrane. The protein localises to the apical cell membrane. It is found in the membrane. The protein resides in the endosome. Its subcellular location is the secreted. It localises to the extracellular space. The protein localises to the extracellular exosome. It is found in the cytoplasmic vesicle. The protein resides in the secretory vesicle lumen. Its subcellular location is the phagocytic cup. In terms of biological role, plays important roles in the innate immune response as effector of glucocorticoid-mediated responses and regulator of the inflammatory process. Has anti-inflammatory activity. Plays a role in glucocorticoid-mediated down-regulation of the early phase of the inflammatory response. Contributes to the adaptive immune response by enhancing signaling cascades that are triggered by T-cell activation, regulates differentiation and proliferation of activated T-cells. Promotes the differentiation of T-cells into Th1 cells and negatively regulates differentiation into Th2 cells. Has no effect on unstimulated T-cells. Negatively regulates hormone exocytosis via activation of the formyl peptide receptors and reorganization of the actin cytoskeleton. Has high affinity for Ca(2+) and can bind up to eight Ca(2+) ions. Displays Ca(2+)-dependent binding to phospholipid membranes. Plays a role in the formation of phagocytic cups and phagosomes. Plays a role in phagocytosis by mediating the Ca(2+)-dependent interaction between phagosomes and the actin cytoskeleton. Functionally, functions at least in part by activating the formyl peptide receptors and downstream signaling cascades. Promotes chemotaxis of granulocytes and monocytes via activation of the formyl peptide receptors. Promotes rearrangement of the actin cytoskeleton, cell polarization and cell migration. Promotes resolution of inflammation and wound healing. Acts via neutrophil N-formyl peptide receptors to enhance the release of CXCL2. This chain is Annexin A1 (ANXA1), found in Sus scrofa (Pig).